We begin with the raw amino-acid sequence, 887 residues long: PAN2-PAN3 deadenylation complex subunit Pan3 (887 aa).

The C3H1-type zinc finger occupies 49 to 77; it reads GVKLKYCRYYAKDKTCFYGEECQFLHEDP. 3 disordered regions span residues 111 to 139, 280 to 307, and 321 to 393; these read GGGA…GLDG, ENNL…SNVS, and PSMG…GQVI. Residues 147–498 form a necessary and sufficient for interaction with PABPC1 but not needed for interaction with PAN2 region; it reads MDGGALTDAS…PPPNRIQKSS (352 aa). Composition is skewed to polar residues over residues 281–290 and 298–307; these read NNLQTPNPTA and GSTSRLSNVS. The PABPC-interacting motif-2 (PAM-2) motif lies at 284-299; the sequence is QTPNPTASEFIPKGGS. 2 positions are modified to phosphoserine: Ser-354 and Ser-361. The segment at 463–750 is pseudokinase domain; that stretch reads QIDQADMPAV…SVNDIMPMIG (288 aa). ATP-binding positions include Arg-521, 570–577, and 644–645; these read DFHAGGET and TK. Residues 789-887 form a knob domain region; that stretch reads TINERPEFQK…ELIAAANGQL (99 aa).

The protein belongs to the protein kinase superfamily. PAN3 family. In terms of assembly, homodimer. Forms a heterotrimer with a catalytic subunit PAN2 to form the poly(A)-nuclease (PAN) deadenylation complex. Interacts (via PAM-2 motif) with poly(A)-binding protein PABPC1 (via PABC domain), conferring substrate specificity of the enzyme complex. Interacts with the GW182 family proteins TNRC6A, TNRC6B and TNRC6C. Interacts with YTHDF3. As to quaternary structure, interacts with PAN2. Interacts (via N-terminus) with PABPC1 at lower efficiency than isoform 3. Interacts with PAN2. Interacts (via N-terminus) with PABPC1 at higher efficiency than isoform 1.

It is found in the cytoplasm. The protein resides in the P-body. Its subcellular location is the nucleus. Regulatory subunit of the poly(A)-nuclease (PAN) deadenylation complex, one of two cytoplasmic mRNA deadenylases involved in general and miRNA-mediated mRNA turnover. PAN specifically shortens poly(A) tails of RNA and the activity is stimulated by poly(A)-binding protein (PABP). PAN deadenylation is followed by rapid degradation of the shortened mRNA tails by the CCR4-NOT complex. Deadenylated mRNAs are then degraded by two alternative mechanisms, namely exosome-mediated 3'-5' exonucleolytic degradation, or deadenylation-dependent mRNA decapping and subsequent 5'-3' exonucleolytic degradation by XRN1. PAN3 acts as a regulator for PAN activity, recruiting the catalytic subunit PAN2 to mRNA via its interaction with RNA and PABP, and to miRNA targets via its interaction with GW182 family proteins. Functionally, decreases PAN2-mediated deadenylation, possibly by preventing progression into the second CCR4-NOT mediated stage of biphasic deadenylation. Has a significant effect on mRNA stability, generally stabilizing a subset of the transcriptome. Stabilizes mRNAs degraded by the AU-rich element (ARE)-mediated mRNA decay pathway but promotes degradation of mRNAs by the microRNA-mediated pathway. Its activity influences mRNP remodeling, specifically reducing formation of a subset of P-bodies containing GW220, an isoform of TNRC6A. Its function is as follows. Enhances PAN2 deadenylase activity and has an extensive effect on mRNA stability, generally enhancing mRNA decay across the transcriptome by multiple pathways, including the AU-rich element (ARE)-mediated pathway, microRNA-mediated pathway and the nonsense-mediated pathway (NMD). Its activity is required for efficient P-body formation. May be involved in regulating mRNAs of genes involved in cell cycle progression and cell proliferation. In Mus musculus (Mouse), this protein is PAN2-PAN3 deadenylation complex subunit Pan3.